A 759-amino-acid chain; its full sequence is uncharacterized protein (759 aa).

2 disordered regions span residues 269 to 328 (SQRV…GEEP) and 406 to 759 (LPLR…AQTA). Positions 289 to 299 (AGGKEEAERGG) are enriched in basic and acidic residues. Over residues 406 to 415 (LPLRPPSGSG) the composition is skewed to low complexity. The segment covering 417-430 (AARKPGYEKEEGRG) has biased composition (basic and acidic residues). A compositionally biased stretch (low complexity) spans 431–444 (RATTASATAATSPR). Composition is skewed to basic and acidic residues over residues 469–518 (PESE…RGEH) and 525–545 (DSGR…EKGT). Positions 585-599 (WVPPPHLLFPSPLPS) are enriched in pro residues. Low complexity predominate over residues 659-680 (SLSSLSSSSSSSSSSSPSYSPS). Residues 681-690 (PLSPPSPVSP) show a composition bias toward pro residues. Low complexity-rich tracts occupy residues 691–704 (SSPR…IRSP) and 728–746 (PPFS…PSAP).

This is an uncharacterized protein from Human herpesvirus 6B (strain Z29) (HHV-6 variant B).